Reading from the N-terminus, the 458-residue chain is Glutamate--tRNA ligase 2 (458 aa).

Residues 20–30 (PSPTGLIHVGN) carry the 'HIGH' region motif. The 'KMSKS' region signature appears at 251–255 (GLSKR). K254 serves as a coordination point for ATP.

It belongs to the class-I aminoacyl-tRNA synthetase family. Glutamate--tRNA ligase type 1 subfamily. In terms of assembly, monomer.

The protein resides in the cytoplasm. The catalysed reaction is tRNA(Glu) + L-glutamate + ATP = L-glutamyl-tRNA(Glu) + AMP + diphosphate. In terms of biological role, catalyzes the attachment of glutamate to tRNA(Glu) in a two-step reaction: glutamate is first activated by ATP to form Glu-AMP and then transferred to the acceptor end of tRNA(Glu). This chain is Glutamate--tRNA ligase 2, found in Xanthobacter autotrophicus (strain ATCC BAA-1158 / Py2).